A 313-amino-acid chain; its full sequence is Aspartate carbamoyltransferase catalytic subunit (313 aa).

2 residues coordinate carbamoyl phosphate: Arg51 and Thr52. An L-aspartate-binding site is contributed by Lys80. Arg101, His129, and Gln132 together coordinate carbamoyl phosphate. L-aspartate-binding residues include Arg162 and Arg224. Residues Leu263 and Pro264 each contribute to the carbamoyl phosphate site.

This sequence belongs to the aspartate/ornithine carbamoyltransferase superfamily. ATCase family. Heterododecamer (2C3:3R2) of six catalytic PyrB chains organized as two trimers (C3), and six regulatory PyrI chains organized as three dimers (R2).

It catalyses the reaction carbamoyl phosphate + L-aspartate = N-carbamoyl-L-aspartate + phosphate + H(+). Its pathway is pyrimidine metabolism; UMP biosynthesis via de novo pathway; (S)-dihydroorotate from bicarbonate: step 2/3. Functionally, catalyzes the condensation of carbamoyl phosphate and aspartate to form carbamoyl aspartate and inorganic phosphate, the committed step in the de novo pyrimidine nucleotide biosynthesis pathway. This chain is Aspartate carbamoyltransferase catalytic subunit, found in Phocaeicola vulgatus (strain ATCC 8482 / DSM 1447 / JCM 5826 / CCUG 4940 / NBRC 14291 / NCTC 11154) (Bacteroides vulgatus).